Consider the following 194-residue polypeptide: Thymidine kinase (194 aa).

ATP-binding positions include Gly15–Ser22 and Asp88–Gln91. Glu89 (proton acceptor) is an active-site residue. Residues Cys145, Cys148, Cys183, and Cys186 each contribute to the Zn(2+) site.

It belongs to the thymidine kinase family. In terms of assembly, homotetramer.

The protein resides in the cytoplasm. The catalysed reaction is thymidine + ATP = dTMP + ADP + H(+). This Bacillus cereus (strain AH820) protein is Thymidine kinase.